Consider the following 446-residue polypeptide: Methionine aminopeptidase 2 (446 aa).

The segment at 1–85 (MAGVTEGEDT…KNKKKKKKKI (85 aa)) is disordered. A compositionally biased stretch (basic and acidic residues) spans 8–32 (EDTKVIESKINELNIDKPKLEDNNE). Residues 42 to 58 (SGDDDDDDKEEDDDNEI) are compositionally biased toward acidic residues. Residues 73-85 (KKNKNKKKKKKKI) show a composition bias toward basic residues. A substrate-binding site is contributed by H197. A divalent metal cation is bound by residues D217, D228, and H299. Position 307 (H307) interacts with substrate. The a divalent metal cation site is built by E332 and E427.

It belongs to the peptidase M24A family. Methionine aminopeptidase eukaryotic type 2 subfamily. Co(2+) is required as a cofactor. The cofactor is Zn(2+). It depends on Mn(2+) as a cofactor. Requires Fe(2+) as cofactor.

The protein resides in the cytoplasm. The enzyme catalyses Release of N-terminal amino acids, preferentially methionine, from peptides and arylamides.. In terms of biological role, cotranslationally removes the N-terminal methionine from nascent proteins. The N-terminal methionine is often cleaved when the second residue in the primary sequence is small and uncharged (Met-Ala-, Cys, Gly, Pro, Ser, Thr, or Val). The sequence is that of Methionine aminopeptidase 2 from Candida albicans (strain SC5314 / ATCC MYA-2876) (Yeast).